We begin with the raw amino-acid sequence, 619 residues long: DEAD-box ATP-dependent RNA helicase 14 (619 aa).

An N-acetylalanine modification is found at A2. In terms of domain architecture, WW spans 17 to 51 (HTLPKPWKGLIDDRTGYLYFWNPETNVTQYEKPTP). The tract at residues 47-139 (EKPTPSLPPK…APASELSPEA (93 aa)) is disordered. Positions 61-71 (VSVSSSVQVQQ) are enriched in low complexity. The span at 78-93 (PKDDDKYSRGSERVSR) shows a compositional bias: basic and acidic residues. The span at 125 to 139 (PLPSSAPASELSPEA) shows a compositional bias: low complexity. S136 is modified (phosphoserine). Residues 158–186 (MSFEATGFPPELLREVLSAGFSAPTPIQA) carry the Q motif motif. In terms of domain architecture, Helicase ATP-binding spans 189-363 (WPIAMQGRDI…ADLLVNPAQV (175 aa)). 202 to 209 (AKTGSGKT) lines the ATP pocket. The DEAD box signature appears at 311 to 314 (DEAD). Residues 392-536 (RLEQILRSQE…RVPPQIREMA (145 aa)) enclose the Helicase C-terminal domain. The segment at 528–619 (VPPQIREMAT…FHETMMMKHR (92 aa)) is disordered. The span at 552 to 568 (PSGGRGRGGDSGYGGRG) shows a compositional bias: gly residues. Composition is skewed to basic and acidic residues over residues 582–595 (GRER…ERFN) and 609–619 (SFHETMMMKHR).

The protein belongs to the DEAD box helicase family. DDX5/DBP2 subfamily. As to expression, ubiquitous. Preferentially expressed in flowers and roots.

It localises to the nucleus. The enzyme catalyses ATP + H2O = ADP + phosphate + H(+). ATP-dependent RNA helicase involved nonsense-mediated mRNA decay and ribosome biogenesis through rRNA processing. This Arabidopsis thaliana (Mouse-ear cress) protein is DEAD-box ATP-dependent RNA helicase 14 (RH14).